We begin with the raw amino-acid sequence, 923 residues long: Protocadherin gamma-B4 (923 aa).

An N-terminal signal peptide occupies residues 1-30; sequence MGSGAGELGRAERLPVLFLFLLSLFCPALC. Cadherin domains lie at 31 to 133, 134 to 242, 243 to 345, 346 to 450, 451 to 560, and 568 to 673; these read EQIR…TPKF, TQNS…APVF, SQDV…APEV, IFQS…APVF, SQSS…APRV, and DGSA…LPDI. The Extracellular segment spans residues 31–689; the sequence is EQIRYRIPEE…SDLQAELQFY (659 aa). 2 N-linked (GlcNAc...) asparagine glycosylation sites follow: N417 and N543. The chain crosses the membrane as a helical span at residues 690–710; the sequence is LVVALALISVLFLVAMILAIA. Residues 711-923 lie on the Cytoplasmic side of the membrane; sequence LRLRRSSSPA…KKKSGKKEKK (213 aa). Disordered regions lie at residues 797 to 832 and 893 to 923; these read SHQQ…WPNN and ATLT…KEKK. Positions 913–923 are enriched in basic residues; it reads NKKKSGKKEKK.

It localises to the cell membrane. Its function is as follows. Potential calcium-dependent cell-adhesion protein. May be involved in the establishment and maintenance of specific neuronal connections in the brain. This Homo sapiens (Human) protein is Protocadherin gamma-B4 (PCDHGB4).